We begin with the raw amino-acid sequence, 82 residues long: ATP synthase subunit c (82 aa).

2 helical membrane passes run 7 to 27 (AASV…PGIG) and 57 to 77 (LAFM…LLFA).

The protein belongs to the ATPase C chain family. As to quaternary structure, F-type ATPases have 2 components, F(1) - the catalytic core - and F(0) - the membrane proton channel. F(1) has five subunits: alpha(3), beta(3), gamma(1), delta(1), epsilon(1). F(0) has four main subunits: a(1), b(1), b'(1) and c(10-14). The alpha and beta chains form an alternating ring which encloses part of the gamma chain. F(1) is attached to F(0) by a central stalk formed by the gamma and epsilon chains, while a peripheral stalk is formed by the delta, b and b' chains.

It localises to the cellular thylakoid membrane. F(1)F(0) ATP synthase produces ATP from ADP in the presence of a proton or sodium gradient. F-type ATPases consist of two structural domains, F(1) containing the extramembraneous catalytic core and F(0) containing the membrane proton channel, linked together by a central stalk and a peripheral stalk. During catalysis, ATP synthesis in the catalytic domain of F(1) is coupled via a rotary mechanism of the central stalk subunits to proton translocation. Its function is as follows. Key component of the F(0) channel; it plays a direct role in translocation across the membrane. A homomeric c-ring of between 10-14 subunits forms the central stalk rotor element with the F(1) delta and epsilon subunits. The protein is ATP synthase subunit c of Synechococcus sp. (strain RCC307).